The primary structure comprises 253 residues: MRLLIEQPRTMSSGSSNFLLVPIPEYPVLDCVPNKNVKIVVLGASNVGKTALIVRFLTKRFIGDYEANTGALYSRKINLDGEQVSLQVQDTPCVSLQDDADGLYCQEQINRSIYWADGYVLVFSITDLNSYRTIQPLYQHVRRIHPSGNIPVIIVGNKSDLLRARQVSDPEGKALADELGGLYFEASARENHESVQAAFLHLCQEVSRALGGGNGEKRKGGLHLARPKSPNMQELKRRFRQVLSSKVKSATAL.

GTP-binding positions include 43–50 (GASNVGKT), 90–97 (DTPCVSLQ), and 157–160 (NKSD). A disordered region spans residues 213 to 233 (GNGEKRKGGLHLARPKSPNMQ).

This sequence belongs to the small GTPase superfamily. Ras family.

The protein resides in the nucleus. The protein localises to the nucleolus. The catalysed reaction is GTP + H2O = GDP + phosphate + H(+). In terms of biological role, regulator of rDNA transcription. This is Ras-like protein family member 11A-like from Danio rerio (Zebrafish).